The sequence spans 334 residues: Thiamine-binding periplasmic protein (334 aa).

A signal peptide spans 1 to 23; that stretch reads MRLLSLLTFSLFAVIGLAPAAQA. Thiamine-binding positions include 64-65, 166-167, Trp202, and 220-223; these read DG, AT, and YTTS.

It belongs to the bacterial solute-binding protein 1 family. In terms of assembly, the complex is composed of two ATP-binding proteins (ThiQ), two transmembrane proteins (ThiP) and a solute-binding protein (ThiB).

It localises to the periplasm. Part of the ABC transporter complex ThiBPQ involved in thiamine import. The polypeptide is Thiamine-binding periplasmic protein (thiB) (Brucella melitensis biotype 1 (strain ATCC 23456 / CCUG 17765 / NCTC 10094 / 16M)).